Reading from the N-terminus, the 313-residue chain is MLDKIIRIATRQSPLALWQAHYVQHLLQANHPGLQIELVPMVTRGDIILDTPLAKVGGKGLFVKELELALLDGRADIAVHSMKDVPIAFPEGLGLVTICEREDPRDAFVSSHYAHLDDLPAGSVVGTSSLRRQCQLRERRPDLIIRDLRGNVGTRLAKLDNGDYQAIILAVAGLKRLGLENRIRYAMSAEESLPAVGQGAVGIECRLDDDHTRQLLAPLNHRHTELRVCAERAMNIRLEGGCQVPIGSYAELEGDTLWLRALVGAPDGSQMIRGERRGPAAEAEQMGIELADELLSRGAREILAAVYLDNPAR.

Cysteine 242 carries the post-translational modification S-(dipyrrolylmethanemethyl)cysteine.

It belongs to the HMBS family. In terms of assembly, monomer. The cofactor is dipyrromethane.

It catalyses the reaction 4 porphobilinogen + H2O = hydroxymethylbilane + 4 NH4(+). Its pathway is porphyrin-containing compound metabolism; protoporphyrin-IX biosynthesis; coproporphyrinogen-III from 5-aminolevulinate: step 2/4. In terms of biological role, tetrapolymerization of the monopyrrole PBG into the hydroxymethylbilane pre-uroporphyrinogen in several discrete steps. This Yersinia pseudotuberculosis serotype O:1b (strain IP 31758) protein is Porphobilinogen deaminase.